Consider the following 391-residue polypeptide: Phosphoglycerate kinase (391 aa).

Residues 21–23 (DLN), arginine 36, 59–62 (HLGR), arginine 113, and arginine 146 each bind substrate. ATP contacts are provided by residues lysine 197, glutamate 319, and 345-348 (GGDT).

The protein belongs to the phosphoglycerate kinase family. Monomer.

The protein resides in the cytoplasm. The catalysed reaction is (2R)-3-phosphoglycerate + ATP = (2R)-3-phospho-glyceroyl phosphate + ADP. It functions in the pathway carbohydrate degradation; glycolysis; pyruvate from D-glyceraldehyde 3-phosphate: step 2/5. This chain is Phosphoglycerate kinase, found in Xanthomonas oryzae pv. oryzae (strain MAFF 311018).